Here is a 273-residue protein sequence, read N- to C-terminus: DnaJ homolog subfamily C member 27-A (273 aa).

Residues 23-30 (GNAEVGKS), 71-75 (DMAGH), and 134-137 (NKID) each bind GTP. In terms of domain architecture, J spans 217–273 (DSWDMLGVKPGATRDEVNKAYRKLAVLLHPDKCMAPGSEDAFKAVVNARTALLKNIK).

The protein belongs to the small GTPase superfamily. Rab family.

The protein resides in the nucleus. Functionally, GTPase possibly involved in regulation of the MEK/ERK pathway. In Xenopus laevis (African clawed frog), this protein is DnaJ homolog subfamily C member 27-A (dnajc27-a).